A 332-amino-acid polypeptide reads, in one-letter code: Beta-ketoacyl-[acyl-carrier-protein] synthase III 2 (332 aa).

Active-site residues include Cys-115 and His-252. The segment at 253 to 257 (SANLR) is ACP-binding. Asn-282 is an active-site residue.

The protein belongs to the thiolase-like superfamily. FabH family. Homodimer.

The protein resides in the cytoplasm. The enzyme catalyses malonyl-[ACP] + acetyl-CoA + H(+) = 3-oxobutanoyl-[ACP] + CO2 + CoA. It functions in the pathway lipid metabolism; fatty acid biosynthesis. Functionally, catalyzes the condensation reaction of fatty acid synthesis by the addition to an acyl acceptor of two carbons from malonyl-ACP. Catalyzes the first condensation reaction which initiates fatty acid synthesis and may therefore play a role in governing the total rate of fatty acid production. Possesses both acetoacetyl-ACP synthase and acetyl transacylase activities. Its substrate specificity determines the biosynthesis of branched-chain and/or straight-chain of fatty acids. The protein is Beta-ketoacyl-[acyl-carrier-protein] synthase III 2 of Halalkalibacterium halodurans (strain ATCC BAA-125 / DSM 18197 / FERM 7344 / JCM 9153 / C-125) (Bacillus halodurans).